Reading from the N-terminus, the 418-residue chain is Beta-arrestin-1 (418 aa).

Positions 1 to 163 are interaction with SRC; sequence MGDKGTRVFK…LEEKIHKRNS (163 aa). The interaction with CHRM2 stretch occupies residues 45-86; sequence PEYLKERRVYVTLTCAFRYGREDLDVLGLTFRKDLFVANVQS. Position 47 is a phosphotyrosine (Tyr-47). Lys-250, Met-255, Lys-324, and Lys-326 together coordinate 1D-myo-inositol hexakisphosphate. The interval 318–418 is interaction with TRAF6; sequence IVSYKVKVKL…GTGSPHLNNR (101 aa). 2 disordered regions span residues 353–374 and 397–418; these read HPKPKEEPPHREVPESETPVDT and KGMKDDKDEEDDGTGSPHLNNR. Positions 355–366 are enriched in basic and acidic residues; that stretch reads KPKEEPPHREVP. Ser-412 bears the Phosphoserine mark. The residue at position 412 (Ser-412) is a Phosphoserine; by GRK5.

It belongs to the arrestin family. In terms of assembly, monomer. Homodimer. Homooligomer; the self-association is mediated by InsP6-binding. Heterooligomer with ARRB2; the association is mediated by InsP6-binding. Interacts with ADRB2 (phosphorylated). Interacts with CHRM2 (phosphorylated). Interacts with LHCGR. Interacts with CYTH2 and CASR. Interacts with AP2B1 (dephosphorylated at 'Tyr-737'); phosphorylation of AP2B1 at 'Tyr-737' disrupts the interaction. Interacts (dephosphorylated at Ser-412) with CLTC. Interacts with CCR2 and GRK2. Interacts with CRR5. Interacts with PTAFR (phosphorylated on serine residues). Interacts with CLTC and MAP2K3. Interacts with CREB1. Interacts with TRAF6. Interacts with IGF1R and MDM2. Interacts with C5AR1. Interacts with PDE4D. Interacts with SRC (via the SH3 domain and the protein kinase domain); the interaction is independent of the phosphorylation state of SRC C-terminus. Interacts with TACR1. Interacts with RAF1. Interacts with CHUK, IKBKB and MAP3K14. Interacts with DVL1; the interaction is enhanced by phosphorylation of DVL1. Interacts with DVL2; the interaction is enhanced by phosphorylation of DVL2. Interacts with IGF1R. Associates with MAP kinase p38. Part of a MAPK signaling complex consisting of TACR1, ARRB1, SRC, MAPK1 (activated) and MAPK3 (activated). Part of a MAPK signaling complex consisting of F2RL1, ARRB1, RAF1, MAPK1 (activated) and MAPK3 (activated). Interacts with GPR143. Interacts with MAP2K4/MKK4. Interacts with HCK and CXCR1 (phosphorylated). Interacts with ACKR3 and ACKR4. Interacts with ARRDC1; the interaction is direct. Interacts with GPR61, GPR62 and GPR135. Constitutively phosphorylated at Ser-412 in the cytoplasm. At the plasma membrane, is rapidly dephosphorylated, a process that is required for clathrin binding and beta-2 adrenergic receptor/ADRB2 endocytosis but not for ADRB2 binding and desensitization. Once internalized, is rephosphorylated. In terms of processing, the ubiquitination status appears to regulate the formation and trafficking of beta-arrestin-GPCR complexes and signaling. Ubiquitination appears to occur GPCR-specific. Ubiquitinated by MDM2; the ubiquitination is required for rapid internalization of ADRB2. Deubiquitinated by USP33; the deubiquitination leads to a dissociation of the beta-arrestin-GPCR complex. Stimulation of a class A GPCR, such as ADRB2, induces transient ubiquitination and subsequently promotes association with USP33. As to expression, predominantly localized in neuronal tissues and in the spleen.

The protein resides in the cytoplasm. It localises to the nucleus. It is found in the cell membrane. Its subcellular location is the membrane. The protein localises to the clathrin-coated pit. The protein resides in the cell projection. It localises to the pseudopodium. It is found in the cytoplasmic vesicle. Its function is as follows. Functions in regulating agonist-mediated G-protein coupled receptor (GPCR) signaling by mediating both receptor desensitization and resensitization processes. During homologous desensitization, beta-arrestins bind to the GPRK-phosphorylated receptor and sterically preclude its coupling to the cognate G-protein; the binding appears to require additional receptor determinants exposed only in the active receptor conformation. The beta-arrestins target many receptors for internalization by acting as endocytic adapters (CLASPs, clathrin-associated sorting proteins) and recruiting the GPRCs to the adapter protein 2 complex 2 (AP-2) in clathrin-coated pits (CCPs). However, the extent of beta-arrestin involvement appears to vary significantly depending on the receptor, agonist and cell type. Internalized arrestin-receptor complexes traffic to intracellular endosomes, where they remain uncoupled from G-proteins. Two different modes of arrestin-mediated internalization occur. Class A receptors, like ADRB2, OPRM1, ENDRA, D1AR and ADRA1B dissociate from beta-arrestin at or near the plasma membrane and undergo rapid recycling. Class B receptors, like AVPR2, AGTR1, NTSR1, TRHR and TACR1 internalize as a complex with arrestin and traffic with it to endosomal vesicles, presumably as desensitized receptors, for extended periods of time. Receptor resensitization then requires that receptor-bound arrestin is removed so that the receptor can be dephosphorylated and returned to the plasma membrane. Involved in internalization of P2RY4 and UTP-stimulated internalization of P2RY2. Involved in phosphorylation-dependent internalization of OPRD1 ands subsequent recycling. Involved in the degradation of cAMP by recruiting cAMP phosphodiesterases to ligand-activated receptors. Beta-arrestins function as multivalent adapter proteins that can switch the GPCR from a G-protein signaling mode that transmits short-lived signals from the plasma membrane via small molecule second messengers and ion channels to a beta-arrestin signaling mode that transmits a distinct set of signals that are initiated as the receptor internalizes and transits the intracellular compartment. Acts as a signaling scaffold for MAPK pathways such as MAPK1/3 (ERK1/2). ERK1/2 activated by the beta-arrestin scaffold is largely excluded from the nucleus and confined to cytoplasmic locations such as endocytic vesicles, also called beta-arrestin signalosomes. Recruits c-Src/SRC to ADRB2 resulting in ERK activation. GPCRs for which the beta-arrestin-mediated signaling relies on both ARRB1 and ARRB2 (codependent regulation) include ADRB2, F2RL1 and PTH1R. For some GPCRs the beta-arrestin-mediated signaling relies on either ARRB1 or ARRB2 and is inhibited by the other respective beta-arrestin form (reciprocal regulation). Inhibits ERK1/2 signaling in AGTR1- and AVPR2-mediated activation (reciprocal regulation). Is required for SP-stimulated endocytosis of NK1R and recruits c-Src/SRC to internalized NK1R resulting in ERK1/2 activation, which is required for the antiapoptotic effects of SP. Is involved in proteinase-activated F2RL1-mediated ERK activity. Acts as a signaling scaffold for the AKT1 pathway. Is involved in alpha-thrombin-stimulated AKT1 signaling. Is involved in IGF1-stimulated AKT1 signaling leading to increased protection from apoptosis. Involved in activation of the p38 MAPK signaling pathway and in actin bundle formation. Involved in F2RL1-mediated cytoskeletal rearrangement and chemotaxis. Involved in AGTR1-mediated stress fiber formation by acting together with GNAQ to activate RHOA. Appears to function as signaling scaffold involved in regulation of MIP-1-beta-stimulated CCR5-dependent chemotaxis. Involved in attenuation of NF-kappa-B-dependent transcription in response to GPCR or cytokine stimulation by interacting with and stabilizing CHUK. May serve as nuclear messenger for GPCRs. Involved in OPRD1-stimulated transcriptional regulation by translocating to CDKN1B and FOS promoter regions and recruiting EP300 resulting in acetylation of histone H4. Involved in regulation of LEF1 transcriptional activity via interaction with DVL1 and/or DVL2 Also involved in regulation of receptors other than GPCRs. Involved in Toll-like receptor and IL-1 receptor signaling through the interaction with TRAF6 which prevents TRAF6 autoubiquitination and oligomerization required for activation of NF-kappa-B and JUN. Binds phosphoinositides. Binds inositolhexakisphosphate (InsP6). Involved in IL8-mediated granule release in neutrophils. Required for atypical chemokine receptor ACKR2-induced RAC1-LIMK1-PAK1-dependent phosphorylation of cofilin (CFL1) and for the up-regulation of ACKR2 from endosomal compartment to cell membrane, increasing its efficiency in chemokine uptake and degradation. Involved in the internalization of the atypical chemokine receptor ACKR3. Negatively regulates the NOTCH signaling pathway by mediating the ubiquitination and degradation of NOTCH1 by ITCH. Participates in the recruitment of the ubiquitin-protein ligase to the receptor. This chain is Beta-arrestin-1, found in Rattus norvegicus (Rat).